We begin with the raw amino-acid sequence, 145 residues long: Deoxyuridine 5'-triphosphate nucleotidohydrolase (145 aa).

Residues 63 to 65 (RSG), N76, and 80 to 82 (TID) contribute to the substrate site.

Belongs to the dUTPase family. The cofactor is Mg(2+).

The catalysed reaction is dUTP + H2O = dUMP + diphosphate + H(+). Its pathway is pyrimidine metabolism; dUMP biosynthesis; dUMP from dCTP (dUTP route): step 2/2. Functionally, this enzyme is involved in nucleotide metabolism: it produces dUMP, the immediate precursor of thymidine nucleotides and it decreases the intracellular concentration of dUTP so that uracil cannot be incorporated into DNA. In Chlamydia pneumoniae (Chlamydophila pneumoniae), this protein is Deoxyuridine 5'-triphosphate nucleotidohydrolase.